The sequence spans 223 residues: Ribose-5-phosphate isomerase A (223 aa).

Residues 32 to 35 (TGST), 85 to 88 (DGAD), and 98 to 101 (KGGG) each bind substrate. Glu107 acts as the Proton acceptor in catalysis. Lys125 serves as a coordination point for substrate.

It belongs to the ribose 5-phosphate isomerase family. As to quaternary structure, homodimer.

The catalysed reaction is aldehydo-D-ribose 5-phosphate = D-ribulose 5-phosphate. The protein operates within carbohydrate degradation; pentose phosphate pathway; D-ribose 5-phosphate from D-ribulose 5-phosphate (non-oxidative stage): step 1/1. Its function is as follows. Catalyzes the reversible conversion of ribose-5-phosphate to ribulose 5-phosphate. The polypeptide is Ribose-5-phosphate isomerase A (Pseudomonas fluorescens (strain ATCC BAA-477 / NRRL B-23932 / Pf-5)).